Reading from the N-terminus, the 206-residue chain is Isochorismatase domain-containing protein 2A (206 aa).

Position 26 is an N6-succinyllysine (K26). Residues K93 and K178 each carry the N6-acetyllysine; alternate modification. 2 positions are modified to N6-succinyllysine; alternate: K93 and K178. N6-acetyllysine is present on residues K182 and K185.

The protein belongs to the isochorismatase family. Interacts with CDKN2A. In terms of tissue distribution, ubiquitous. Expressed predominantly in uterus, stomach and urinary tract.

It is found in the cytoplasm. The protein localises to the nucleus. The sequence is that of Isochorismatase domain-containing protein 2A from Mus musculus (Mouse).